Reading from the N-terminus, the 174-residue chain is Nucleoside-triphosphatase THEP1 (174 aa).

Residues 7-14 (GRPGSGKS) and 98-105 (CIIIDEIG) contribute to the ATP site.

The protein belongs to the THEP1 NTPase family.

It catalyses the reaction a ribonucleoside 5'-triphosphate + H2O = a ribonucleoside 5'-diphosphate + phosphate + H(+). Its function is as follows. Has nucleotide phosphatase activity towards ATP, GTP, CTP, TTP and UTP. May hydrolyze nucleoside diphosphates with lower efficiency. The polypeptide is Nucleoside-triphosphatase THEP1 (Methanothermobacter thermautotrophicus (strain ATCC 29096 / DSM 1053 / JCM 10044 / NBRC 100330 / Delta H) (Methanobacterium thermoautotrophicum)).